A 205-amino-acid polypeptide reads, in one-letter code: DNA-directed RNA polymerase RPB5 homolog (205 aa).

This sequence belongs to the archaeal RpoH/eukaryotic RPB5 RNA polymerase subunit family. As to quaternary structure, part of the viral DNA-directed RNA polymerase that consists of 8 polII-like subunits (RPB1, RPB2, RPB3, RPB5, RPB6, RPB7, RPB9, RPB10), a capping enzyme and a termination factor.

Its subcellular location is the host cytoplasm. The protein localises to the virion. Its function is as follows. Component of the DNA-directed RNA polymerase (RNAP) that catalyzes the transcription in the cytoplasm of viral DNA into RNA using the four ribonucleoside triphosphates as substrates. This Ornithodoros (relapsing fever ticks) protein is DNA-directed RNA polymerase RPB5 homolog.